The primary structure comprises 404 residues: Corticosteroid-binding globulin (404 aa).

The signal sequence occupies residues 1–22 (MLPTLYTCLLWLSTSGLWTVQA). Residues asparagine 95, asparagine 119, and asparagine 175 are each glycosylated (N-linked (GlcNAc...) asparagine). Glutamine 253 contacts cortisol. Asparagine 259 carries an N-linked (GlcNAc...) asparagine glycan. Glutamine 285 contacts cortisol. N-linked (GlcNAc...) asparagine glycosylation occurs at asparagine 326. Position 392 (tryptophan 392) interacts with cortisol.

Belongs to the serpin family. Post-translationally, glycosylation in position Asn-259 is needed for steroid binding.

The protein resides in the secreted. Its function is as follows. Major transport protein for glucocorticoids and progestins in the blood of almost all vertebrate species. In Bos taurus (Bovine), this protein is Corticosteroid-binding globulin (SERPINA6).